The primary structure comprises 128 residues: Sulfurtransferase TusD (128 aa).

The active-site Cysteine persulfide intermediate is Cys78.

Belongs to the DsrE/TusD family. In terms of assembly, heterohexamer, formed by a dimer of trimers. The hexameric TusBCD complex contains 2 copies each of TusB, TusC and TusD. The TusBCD complex interacts with TusE.

It is found in the cytoplasm. Its function is as follows. Part of a sulfur-relay system required for 2-thiolation of 5-methylaminomethyl-2-thiouridine (mnm(5)s(2)U) at tRNA wobble positions. Accepts sulfur from TusA and transfers it in turn to TusE. This Escherichia coli (strain K12 / MC4100 / BW2952) protein is Sulfurtransferase TusD.